Reading from the N-terminus, the 267-residue chain is NAD kinase 2 (267 aa).

Asp50 (proton acceptor) is an active-site residue. NAD(+)-binding positions include 50 to 51 (DG), Lys55, 122 to 123 (NE), Arg149, Asp151, 162 to 167 (TAYNKS), and Ala186.

Belongs to the NAD kinase family. A divalent metal cation is required as a cofactor.

It localises to the cytoplasm. The catalysed reaction is NAD(+) + ATP = ADP + NADP(+) + H(+). Involved in the regulation of the intracellular balance of NAD and NADP, and is a key enzyme in the biosynthesis of NADP. Catalyzes specifically the phosphorylation on 2'-hydroxyl of the adenosine moiety of NAD to yield NADP. The polypeptide is NAD kinase 2 (Listeria monocytogenes serovar 1/2a (strain ATCC BAA-679 / EGD-e)).